The sequence spans 73 residues: MKTLHLLLLISGLLSVFVKGVGSHPGTVHVRFKCIPKIAAVFGDNCPFYGNVDGLCNDKKSVCCMVPVRLDNI.

An N-terminal signal peptide occupies residues 1-23 (MKTLHLLLLISGLLSVFVKGVGS). Intrachain disulfides connect C34-C63 and C46-C64.

Belongs to the beta-defensin family.

It localises to the secreted. Has bactericidal activity. The polypeptide is Beta-defensin 50 (Defb50) (Rattus norvegicus (Rat)).